Consider the following 201-residue polypeptide: FMN-dependent NADH:quinone oxidoreductase (201 aa).

Residues serine 10, 16–18 (SQS), 96–99 (MYNF), and 140–143 (SRGG) each bind FMN.

Belongs to the azoreductase type 1 family. In terms of assembly, homodimer. The cofactor is FMN.

The enzyme catalyses 2 a quinone + NADH + H(+) = 2 a 1,4-benzosemiquinone + NAD(+). The catalysed reaction is N,N-dimethyl-1,4-phenylenediamine + anthranilate + 2 NAD(+) = 2-(4-dimethylaminophenyl)diazenylbenzoate + 2 NADH + 2 H(+). Functionally, quinone reductase that provides resistance to thiol-specific stress caused by electrophilic quinones. Its function is as follows. Also exhibits azoreductase activity. Catalyzes the reductive cleavage of the azo bond in aromatic azo compounds to the corresponding amines. This Salmonella arizonae (strain ATCC BAA-731 / CDC346-86 / RSK2980) protein is FMN-dependent NADH:quinone oxidoreductase.